Consider the following 99-residue polypeptide: Putative membrane protein insertion efficiency factor (99 aa).

This sequence belongs to the UPF0161 family.

It is found in the cell membrane. Could be involved in insertion of integral membrane proteins into the membrane. This chain is Putative membrane protein insertion efficiency factor, found in Corynebacterium efficiens (strain DSM 44549 / YS-314 / AJ 12310 / JCM 11189 / NBRC 100395).